We begin with the raw amino-acid sequence, 92 residues long: Small cysteine and glycine repeat-containing protein 9 (92 aa).

The 11 X 2 AA repeats of CG stretch occupies residues 4–72 (CGCGSCGCSG…CCRRTCSSCG (69 aa)).

Belongs to the KRTAP type 28 family.

In the hair cortex, hair keratin intermediate filaments are embedded in an interfilamentous matrix, consisting of hair keratin-associated proteins (KRTAP), which are essential for the formation of a rigid and resistant hair shaft through their extensive disulfide bond cross-linking with abundant cysteine residues of hair keratins. The matrix proteins include the high-sulfur and high-glycine-tyrosine keratins. The polypeptide is Small cysteine and glycine repeat-containing protein 9 (Homo sapiens (Human)).